A 459-amino-acid chain; its full sequence is Siroheme synthase (459 aa).

Positions 1 to 204 are precorrin-2 dehydrogenase /sirohydrochlorin ferrochelatase; it reads MDHLPIFCQL…ADEKAVNATT (204 aa). NAD(+) is bound by residues 22–23 and 43–44; these read DV and LT. Ser128 is subject to Phosphoserine. Residues 216–459 are uroporphyrinogen-III C-methyltransferase; sequence GEVVLVGAGP…KLNWFSNYYD (244 aa). Pro225 is an S-adenosyl-L-methionine binding site. Asp248 serves as the catalytic Proton acceptor. Lys270 acts as the Proton donor in catalysis. S-adenosyl-L-methionine is bound by residues 301-303, Ile306, 331-332, Met382, and Gly411; these read GGD and TA.

The protein in the N-terminal section; belongs to the precorrin-2 dehydrogenase / sirohydrochlorin ferrochelatase family. It in the C-terminal section; belongs to the precorrin methyltransferase family.

The catalysed reaction is uroporphyrinogen III + 2 S-adenosyl-L-methionine = precorrin-2 + 2 S-adenosyl-L-homocysteine + H(+). It carries out the reaction precorrin-2 + NAD(+) = sirohydrochlorin + NADH + 2 H(+). It catalyses the reaction siroheme + 2 H(+) = sirohydrochlorin + Fe(2+). Its pathway is cofactor biosynthesis; adenosylcobalamin biosynthesis; precorrin-2 from uroporphyrinogen III: step 1/1. The protein operates within cofactor biosynthesis; adenosylcobalamin biosynthesis; sirohydrochlorin from precorrin-2: step 1/1. It participates in porphyrin-containing compound metabolism; siroheme biosynthesis; precorrin-2 from uroporphyrinogen III: step 1/1. It functions in the pathway porphyrin-containing compound metabolism; siroheme biosynthesis; siroheme from sirohydrochlorin: step 1/1. Its pathway is porphyrin-containing compound metabolism; siroheme biosynthesis; sirohydrochlorin from precorrin-2: step 1/1. Functionally, multifunctional enzyme that catalyzes the SAM-dependent methylations of uroporphyrinogen III at position C-2 and C-7 to form precorrin-2 via precorrin-1. Then it catalyzes the NAD-dependent ring dehydrogenation of precorrin-2 to yield sirohydrochlorin. Finally, it catalyzes the ferrochelation of sirohydrochlorin to yield siroheme. This chain is Siroheme synthase, found in Salmonella agona (strain SL483).